Consider the following 217-residue polypeptide: Probable transaldolase (217 aa).

K83 (schiff-base intermediate with substrate) is an active-site residue.

This sequence belongs to the transaldolase family. Type 3B subfamily.

The protein resides in the cytoplasm. The enzyme catalyses D-sedoheptulose 7-phosphate + D-glyceraldehyde 3-phosphate = D-erythrose 4-phosphate + beta-D-fructose 6-phosphate. It functions in the pathway carbohydrate degradation; pentose phosphate pathway; D-glyceraldehyde 3-phosphate and beta-D-fructose 6-phosphate from D-ribose 5-phosphate and D-xylulose 5-phosphate (non-oxidative stage): step 2/3. Functionally, transaldolase is important for the balance of metabolites in the pentose-phosphate pathway. The chain is Probable transaldolase from Rhizorhabdus wittichii (strain DSM 6014 / CCUG 31198 / JCM 15750 / NBRC 105917 / EY 4224 / RW1) (Sphingomonas wittichii).